The primary structure comprises 126 residues: Holo-[acyl-carrier-protein] synthase (126 aa).

2 residues coordinate Mg(2+): D9 and E58.

Belongs to the P-Pant transferase superfamily. AcpS family. Mg(2+) is required as a cofactor.

It is found in the cytoplasm. The enzyme catalyses apo-[ACP] + CoA = holo-[ACP] + adenosine 3',5'-bisphosphate + H(+). Its function is as follows. Transfers the 4'-phosphopantetheine moiety from coenzyme A to a Ser of acyl-carrier-protein. This is Holo-[acyl-carrier-protein] synthase from Pectobacterium carotovorum subsp. carotovorum (strain PC1).